We begin with the raw amino-acid sequence, 141 residues long: ATP synthase epsilon chain (141 aa).

Belongs to the ATPase epsilon chain family. As to quaternary structure, F-type ATPases have 2 components, CF(1) - the catalytic core - and CF(0) - the membrane proton channel. CF(1) has five subunits: alpha(3), beta(3), gamma(1), delta(1), epsilon(1). CF(0) has three main subunits: a, b and c.

It is found in the cell inner membrane. Functionally, produces ATP from ADP in the presence of a proton gradient across the membrane. This chain is ATP synthase epsilon chain, found in Chromohalobacter salexigens (strain ATCC BAA-138 / DSM 3043 / CIP 106854 / NCIMB 13768 / 1H11).